An 86-amino-acid chain; its full sequence is Large ribosomal subunit protein bL27 (86 aa).

The protein belongs to the bacterial ribosomal protein bL27 family.

The polypeptide is Large ribosomal subunit protein bL27 (Xanthomonas campestris pv. campestris (strain 8004)).